The chain runs to 514 residues: Intracellular exo-alpha-L-arabinofuranosidase (514 aa).

Alpha-L-arabinofuranose-binding residues include E47 and N194. Catalysis depends on E195, which acts as the Proton donor/acceptor. Alpha-L-arabinofuranose contacts are provided by Y261, E317, and Q366. The active-site Nucleophile is E317.

Belongs to the glycosyl hydrolase 51 family. Homohexamer; trimer of dimers.

The protein localises to the cytoplasm. It catalyses the reaction Hydrolysis of terminal non-reducing alpha-L-arabinofuranoside residues in alpha-L-arabinosides.. The protein operates within glycan metabolism; L-arabinan degradation. Its function is as follows. Involved in the degradation of arabinan and is a key enzyme in the complete degradation of the plant cell wall. Catalyzes the cleavage of terminal alpha-L-arabinofuranosyl residues in different hemicellulosic homopolysaccharides (branched and debranched arabinans) and heteropolysaccharides (arabinoxylans). This Bacteroides ovatus protein is Intracellular exo-alpha-L-arabinofuranosidase (asdII).